A 185-amino-acid chain; its full sequence is Peptidyl-tRNA hydrolase (185 aa).

Tyrosine 14 contributes to the tRNA binding site. Residue histidine 19 is the Proton acceptor of the active site. Residues tyrosine 64, asparagine 66, and asparagine 112 each coordinate tRNA.

Belongs to the PTH family. In terms of assembly, monomer.

The protein resides in the cytoplasm. The enzyme catalyses an N-acyl-L-alpha-aminoacyl-tRNA + H2O = an N-acyl-L-amino acid + a tRNA + H(+). Functionally, hydrolyzes ribosome-free peptidyl-tRNAs (with 1 or more amino acids incorporated), which drop off the ribosome during protein synthesis, or as a result of ribosome stalling. Its function is as follows. Catalyzes the release of premature peptidyl moieties from peptidyl-tRNA molecules trapped in stalled 50S ribosomal subunits, and thus maintains levels of free tRNAs and 50S ribosomes. In Lactiplantibacillus plantarum (strain ATCC BAA-793 / NCIMB 8826 / WCFS1) (Lactobacillus plantarum), this protein is Peptidyl-tRNA hydrolase.